A 406-amino-acid polypeptide reads, in one-letter code: Protein IWS1 homolog 2 (406 aa).

2 disordered regions span residues 1–28 and 41–89; these read MQEL…TGRR and DEVE…SEEV. The segment covering 10-24 has biased composition (basic and acidic residues); the sequence is EWVKELEGENEESKF. Residues 41 to 56 are compositionally biased toward acidic residues; sequence DEVEEDLDDFTEPADD. Basic and acidic residues predominate over residues 69–78; sequence KKDESGLEKT. Positions 201-284 constitute a TFIIS N-terminal domain; the sequence is NLLKNWLEPL…NKWGRIIYNK (84 aa).

It belongs to the IWS1 family.

The protein resides in the nucleus. Its function is as follows. Transcription factor involved in RNA polymerase II (RNAPII) transcription regulation. Involved in transcription elongation. May function at post-recruitment and elongation steps of transcription. This Arabidopsis thaliana (Mouse-ear cress) protein is Protein IWS1 homolog 2.